Consider the following 92-residue polypeptide: Small ribosomal subunit protein uS19 (92 aa).

Belongs to the universal ribosomal protein uS19 family.

Functionally, protein S19 forms a complex with S13 that binds strongly to the 16S ribosomal RNA. This Xanthobacter autotrophicus (strain ATCC BAA-1158 / Py2) protein is Small ribosomal subunit protein uS19.